Consider the following 546-residue polypeptide: CTP synthase (546 aa).

The amidoligase domain stretch occupies residues 1 to 266 (MTTRYIFVTG…DQLVTKRFGI (266 aa)). Position 14 (S14) interacts with CTP. S14 lines the UTP pocket. ATP is bound by residues 15-20 (SLGKGI) and D72. Residues D72 and E140 each contribute to the Mg(2+) site. Residues 147 to 149 (DIE), 187 to 192 (KTKPTQ), and K223 each bind CTP. UTP contacts are provided by residues 187-192 (KTKPTQ) and K223. 239 to 241 (KDV) provides a ligand contact to ATP. The 252-residue stretch at 291–542 (TIGMVGKYIE…VAAAYTYQKR (252 aa)) folds into the Glutamine amidotransferase type-1 domain. G352 serves as a coordination point for L-glutamine. C379 (nucleophile; for glutamine hydrolysis) is an active-site residue. Residues 380–383 (LGMQ), E403, and R470 contribute to the L-glutamine site. Residues H515 and E517 contribute to the active site.

Belongs to the CTP synthase family. In terms of assembly, homotetramer.

The catalysed reaction is UTP + L-glutamine + ATP + H2O = CTP + L-glutamate + ADP + phosphate + 2 H(+). The enzyme catalyses L-glutamine + H2O = L-glutamate + NH4(+). It carries out the reaction UTP + NH4(+) + ATP = CTP + ADP + phosphate + 2 H(+). Its pathway is pyrimidine metabolism; CTP biosynthesis via de novo pathway; CTP from UDP: step 2/2. Its activity is regulated as follows. Allosterically activated by GTP, when glutamine is the substrate; GTP has no effect on the reaction when ammonia is the substrate. The allosteric effector GTP functions by stabilizing the protein conformation that binds the tetrahedral intermediate(s) formed during glutamine hydrolysis. Inhibited by the product CTP, via allosteric rather than competitive inhibition. Its function is as follows. Catalyzes the ATP-dependent amination of UTP to CTP with either L-glutamine or ammonia as the source of nitrogen. Regulates intracellular CTP levels through interactions with the four ribonucleotide triphosphates. This Shewanella halifaxensis (strain HAW-EB4) protein is CTP synthase.